A 1146-amino-acid polypeptide reads, in one-letter code: Inositol hexakisphosphate and diphosphoinositol-pentakisphosphate kinase (1146 aa).

A disordered region spans residues 1 to 33; it reads MSGIKKEPIESDEVPQQETKNNLPSAPSEMSPL. Residues 16–25 are compositionally biased toward polar residues; the sequence is QQETKNNLPS. S31, S54, and S77 each carry phosphoserine. Positions 93 to 185 are disordered; it reads TALGNGNNTN…STSHPKPRLP (93 aa). Over residues 96–106 the composition is skewed to low complexity; sequence GNGNNTNTVTT. Residues 110–120 are compositionally biased toward basic and acidic residues; the sequence is KKADSESKSEA. The span at 125–144 shows a compositional bias: polar residues; that stretch reads LSNSNIVNDADNINSISKTG. Positions 164–178 are enriched in low complexity; it reads SVPTSSASSRKSSTS. Position 197-198 (197-198) interacts with substrate; the sequence is AK. ATP contacts are provided by residues R278, K351, H358, R377, 402–405, and 412–414; these read EQFM and DVK. 377–378 is a substrate binding site; that stretch reads RK. Residues K414 and R428 each contribute to the substrate site. Residues S430, D475, and 487–489 contribute to the ATP site; that span reads DVN. 492–495 lines the substrate pocket; the sequence is SFVK. The tract at residues 530–597 is polyphosphoinositide-binding domain; sequence REEKEQKWVF…VLQALRIALD (68 aa). 2 positions are modified to phosphoserine: S895 and S1107. Residues 1106-1146 are disordered; the sequence is TSPNLSFQKRKTRRKSVSVEKLKRPASSGSSSSTSVNKTLD.

The protein belongs to the histidine acid phosphatase family. VIP1 subfamily.

The protein localises to the cytoplasm. Its subcellular location is the cytoskeleton. It catalyses the reaction 1D-myo-inositol hexakisphosphate + ATP = 1-diphospho-1D-myo-inositol 2,3,4,5,6-pentakisphosphate + ADP. The enzyme catalyses 5-diphospho-1D-myo-inositol 1,2,3,4,6-pentakisphosphate + ATP + H(+) = 1,5-bis(diphospho)-1D-myo-inositol 2,3,4,6-tetrakisphosphate + ADP. In terms of biological role, bifunctional inositol kinase that acts in concert with the IP6K kinases to synthesize the diphosphate group-containing inositol pyrophosphates diphosphoinositol pentakisphosphate, PP-InsP5, and bis-diphosphoinositol tetrakisphosphate, (PP)2-InsP4. Phosphorylates inositol hexakisphosphate (InsP6) at position 1 to produce PP-InsP5 which is in turn phosphorylated by IP6Ks to produce (PP)2-InsP4. Alternatively, phosphorylates PP-InsP5 at position 1, produced by IP6Ks from InsP6, to produce (PP)2-InsP4. Required for maintaining cellular integrity, normal growth and interactions with the ARP complex. Acts as a regulator of the PHO80-PHO85 cyclin/cyclin-dependent kinase (CDK) complex, thereby regulating signaling of phosphate availability. Required for the function of the cortical actin cytoskeleton, possibly by participating in correct F-actin localization and ensuring polarized growth. Regulates polarized growth and modulates interphase microtubule cytoskeleton. Regulates microtubule dynamics without the requirement of microtubule plus-end tracking protein Mal3. Required for growth zone selection. The polypeptide is Inositol hexakisphosphate and diphosphoinositol-pentakisphosphate kinase (Saccharomyces cerevisiae (strain ATCC 204508 / S288c) (Baker's yeast)).